The sequence spans 242 residues: MLPSMMVARPDPQTTSSSSHRGLLIVMTGASGVGKGTLRERWLAGQDVFYSTSWTTREARPGERDGVDYVFVTPEVFLEKVRQNGFLEHAQFVGNHYGTPTEPIEAALARGQDVVLEIEVEGAMQVKERMGEEAVLVFIMPPSLTELRRRLTGRATETPERIEKRLQRARDEIMAAHAFRYVIVNDDLDRAVRELQAVQRAEHARQRPETEWTAEDRAAVQLAETVRSTVLTTEDLQRIVNS.

Residues 22 to 200 (GLLIVMTGAS…AVRELQAVQR (179 aa)) enclose the Guanylate kinase-like domain. 29–36 (GASGVGKG) is an ATP binding site.

The protein belongs to the guanylate kinase family.

The protein resides in the cytoplasm. It catalyses the reaction GMP + ATP = GDP + ADP. In terms of biological role, essential for recycling GMP and indirectly, cGMP. The protein is Guanylate kinase of Deinococcus geothermalis (strain DSM 11300 / CIP 105573 / AG-3a).